The chain runs to 117 residues: MPRVKRGVQARARHKKVLKQAKGYYGARSRVYRVAFQAVIKAGQYAYRDRRAKKRQFRQLWIARINAAARQNGLSYSRFINGLKKASIEIDRKILADIAVFDKAAFAVLVEKAKGAL.

Belongs to the bacterial ribosomal protein bL20 family.

In terms of biological role, binds directly to 23S ribosomal RNA and is necessary for the in vitro assembly process of the 50S ribosomal subunit. It is not involved in the protein synthesizing functions of that subunit. This Vibrio cholerae serotype O1 (strain ATCC 39541 / Classical Ogawa 395 / O395) protein is Large ribosomal subunit protein bL20.